A 448-amino-acid polypeptide reads, in one-letter code: Maintenance of mitochondrial morphology protein 1 (448 aa).

The Lumenal segment spans residues 1–74 (MTESVIYSGT…LNHTWSFTQG (74 aa)). A helical transmembrane segment spans residues 75–95 (LVVGQLSVIVVVAIFIKFFVF). The Cytoplasmic portion of the chain corresponds to 96–448 (ADSSATTTTT…IVDKTEEASI (353 aa)). Disordered regions lie at residues 119–144 (RNKNVRGTSNEDKDPNNNKEDDLNSP) and 303–357 (LQNV…SQED). Residues 127 to 140 (SNEDKDPNNNKEDD) are compositionally biased toward basic and acidic residues. In terms of domain architecture, SMP-LTD spans 164 to 419 (SPESLDWFNV…EPRFQVVKVP (256 aa)). The segment covering 313–332 (PSNEPNSQNQTQQPTPVNNS) has biased composition (low complexity). The span at 345-356 (ETKHSKAKRSQE) shows a compositional bias: basic and acidic residues.

Belongs to the MMM1 family. As to quaternary structure, homodimer. Component of the ER-mitochondria encounter structure (ERMES) or MDM complex, composed of MMM1, MDM10, MDM12 and MDM34. An MMM1 homodimer associates with one molecule of MDM12 on each side in a pairwise head-to-tail manner, and the SMP-LTD domains of MMM1 and MDM12 generate a continuous hydrophobic tunnel for phospholipid trafficking.

Its subcellular location is the endoplasmic reticulum membrane. In terms of biological role, component of the ERMES/MDM complex, which serves as a molecular tether to connect the endoplasmic reticulum (ER) and mitochondria. Components of this complex are involved in the control of mitochondrial shape and protein biogenesis, and function in nonvesicular lipid trafficking between the ER and mitochondria. The MDM12-MMM1 subcomplex functions in the major beta-barrel assembly pathway that is responsible for biogenesis of all outer membrane beta-barrel proteins, and acts in a late step after the SAM complex. The MDM10-MDM12-MMM1 subcomplex further acts in the TOM40-specific pathway after the action of the MDM12-MMM1 complex. Essential for establishing and maintaining the structure of mitochondria and maintenance of mtDNA nucleoids. The sequence is that of Maintenance of mitochondrial morphology protein 1 from Debaryomyces hansenii (strain ATCC 36239 / CBS 767 / BCRC 21394 / JCM 1990 / NBRC 0083 / IGC 2968) (Yeast).